The chain runs to 364 residues: Aminomethyltransferase (364 aa).

This sequence belongs to the GcvT family. The glycine cleavage system is composed of four proteins: P, T, L and H.

It carries out the reaction N(6)-[(R)-S(8)-aminomethyldihydrolipoyl]-L-lysyl-[protein] + (6S)-5,6,7,8-tetrahydrofolate = N(6)-[(R)-dihydrolipoyl]-L-lysyl-[protein] + (6R)-5,10-methylene-5,6,7,8-tetrahydrofolate + NH4(+). In terms of biological role, the glycine cleavage system catalyzes the degradation of glycine. This is Aminomethyltransferase from Shewanella baltica (strain OS195).